Reading from the N-terminus, the 647-residue chain is Threonine--tRNA ligase (647 aa).

The TGS domain maps to 1–61; the sequence is MIKITFPDGA…EEDGSIEIVT (61 aa). Residues 240-538 form a catalytic region; it reads DHRKLGKELD…LIETYKGAFP (299 aa). Zn(2+) contacts are provided by C334, H385, and H515.

Belongs to the class-II aminoacyl-tRNA synthetase family. Homodimer. Zn(2+) serves as cofactor.

It is found in the cytoplasm. It carries out the reaction tRNA(Thr) + L-threonine + ATP = L-threonyl-tRNA(Thr) + AMP + diphosphate + H(+). In terms of biological role, catalyzes the attachment of threonine to tRNA(Thr) in a two-step reaction: L-threonine is first activated by ATP to form Thr-AMP and then transferred to the acceptor end of tRNA(Thr). Also edits incorrectly charged L-seryl-tRNA(Thr). This is Threonine--tRNA ligase from Streptococcus pyogenes serotype M1.